The sequence spans 347 residues: 4-hydroxy-tetrahydrodipicolinate reductase 1, chloroplastic (347 aa).

The transit peptide at 1–51 (MATNGLMASSSVFLHRPRIAFASRTNQTVGKYGKGRVSFMGIGTRRLPVVL) directs the protein to the chloroplast. At Ser52 the chain carries N-acetylserine. NAD(+) is bound by residues 79–84 (GCSGKM), 171–173 (GTT), and 194–197 (SPQM). The active-site Proton donor/acceptor is His230. Residue Lys234 is the Proton donor of the active site. 239–240 (GT) lines the (S)-2,3,4,5-tetrahydrodipicolinate pocket.

This sequence belongs to the DapB family.

Its subcellular location is the plastid. The protein localises to the chloroplast. The catalysed reaction is (S)-2,3,4,5-tetrahydrodipicolinate + NAD(+) + H2O = (2S,4S)-4-hydroxy-2,3,4,5-tetrahydrodipicolinate + NADH + H(+). The enzyme catalyses (S)-2,3,4,5-tetrahydrodipicolinate + NADP(+) + H2O = (2S,4S)-4-hydroxy-2,3,4,5-tetrahydrodipicolinate + NADPH + H(+). Its pathway is amino-acid biosynthesis; L-lysine biosynthesis via DAP pathway; (S)-tetrahydrodipicolinate from L-aspartate: step 4/4. Its function is as follows. Catalyzes the conversion of 4-hydroxy-tetrahydrodipicolinate (HTPA) to tetrahydrodipicolinate. This Arabidopsis thaliana (Mouse-ear cress) protein is 4-hydroxy-tetrahydrodipicolinate reductase 1, chloroplastic (DAPB1).